The following is a 196-amino-acid chain: Peptidyl-tRNA hydrolase (196 aa).

H15 contacts tRNA. The Proton acceptor role is filled by H20. Residues Y66, N68, and N114 each coordinate tRNA.

This sequence belongs to the PTH family. As to quaternary structure, monomer.

It localises to the cytoplasm. It catalyses the reaction an N-acyl-L-alpha-aminoacyl-tRNA + H2O = an N-acyl-L-amino acid + a tRNA + H(+). Its function is as follows. Hydrolyzes ribosome-free peptidyl-tRNAs (with 1 or more amino acids incorporated), which drop off the ribosome during protein synthesis, or as a result of ribosome stalling. In terms of biological role, catalyzes the release of premature peptidyl moieties from peptidyl-tRNA molecules trapped in stalled 50S ribosomal subunits, and thus maintains levels of free tRNAs and 50S ribosomes. This Polynucleobacter necessarius subsp. necessarius (strain STIR1) protein is Peptidyl-tRNA hydrolase.